The primary structure comprises 311 residues: Methionyl-tRNA formyltransferase (311 aa).

Residue 109 to 112 (SLLP) coordinates (6S)-5,6,7,8-tetrahydrofolate.

This sequence belongs to the Fmt family.

It carries out the reaction L-methionyl-tRNA(fMet) + (6R)-10-formyltetrahydrofolate = N-formyl-L-methionyl-tRNA(fMet) + (6S)-5,6,7,8-tetrahydrofolate + H(+). Its function is as follows. Attaches a formyl group to the free amino group of methionyl-tRNA(fMet). The formyl group appears to play a dual role in the initiator identity of N-formylmethionyl-tRNA by promoting its recognition by IF2 and preventing the misappropriation of this tRNA by the elongation apparatus. The chain is Methionyl-tRNA formyltransferase from Solibacter usitatus (strain Ellin6076).